The chain runs to 101 residues: opdI (101 aa).

Residues 30–49 (GGMGGALKIVFLGMMTYFIA) form a helical membrane-spanning segment. Positions 56-101 (SQHPPTDFNAPVQSVPQRAQRPSDTRLQGPVLLASNHPSGDSASPE) are disordered. Polar residues-rich tracts occupy residues 66–81 (PVQS…SDTR) and 91–101 (NHPSGDSASPE).

Its subcellular location is the membrane. Functionally, part of the gene cluster that mediates the biosynthesis of oxopyrrolidines, polyketide-amino acid hybrid compounds with feature structures of tetramic acid. Does not seem to play a role in oxopyrrolidines A and B biosynthesis. The chain is opdI from Penicillium oxalicum (strain 114-2 / CGMCC 5302) (Penicillium decumbens).